The chain runs to 457 residues: Siroheme synthase (457 aa).

Positions 1 to 204 are precorrin-2 dehydrogenase /sirohydrochlorin ferrochelatase; it reads MDHLPIFCQL…ADEKAVNATT (204 aa). NAD(+) contacts are provided by residues 22–23 and 43–44; these read DV and LT. Ser128 is subject to Phosphoserine. The tract at residues 216–457 is uroporphyrinogen-III C-methyltransferase; that stretch reads GEVVLVGAGP…RDKLNWFSNH (242 aa). Pro225 contacts S-adenosyl-L-methionine. Asp248 (proton acceptor) is an active-site residue. Catalysis depends on Lys270, which acts as the Proton donor. S-adenosyl-L-methionine is bound by residues 301–303, Ile306, 331–332, Met382, and Gly411; these read GGD and TA.

This sequence in the N-terminal section; belongs to the precorrin-2 dehydrogenase / sirohydrochlorin ferrochelatase family. It in the C-terminal section; belongs to the precorrin methyltransferase family.

It catalyses the reaction uroporphyrinogen III + 2 S-adenosyl-L-methionine = precorrin-2 + 2 S-adenosyl-L-homocysteine + H(+). It carries out the reaction precorrin-2 + NAD(+) = sirohydrochlorin + NADH + 2 H(+). The catalysed reaction is siroheme + 2 H(+) = sirohydrochlorin + Fe(2+). It participates in cofactor biosynthesis; adenosylcobalamin biosynthesis; precorrin-2 from uroporphyrinogen III: step 1/1. Its pathway is cofactor biosynthesis; adenosylcobalamin biosynthesis; sirohydrochlorin from precorrin-2: step 1/1. The protein operates within porphyrin-containing compound metabolism; siroheme biosynthesis; precorrin-2 from uroporphyrinogen III: step 1/1. It functions in the pathway porphyrin-containing compound metabolism; siroheme biosynthesis; siroheme from sirohydrochlorin: step 1/1. It participates in porphyrin-containing compound metabolism; siroheme biosynthesis; sirohydrochlorin from precorrin-2: step 1/1. Functionally, multifunctional enzyme that catalyzes the SAM-dependent methylations of uroporphyrinogen III at position C-2 and C-7 to form precorrin-2 via precorrin-1. Then it catalyzes the NAD-dependent ring dehydrogenation of precorrin-2 to yield sirohydrochlorin. Finally, it catalyzes the ferrochelation of sirohydrochlorin to yield siroheme. The chain is Siroheme synthase from Salmonella typhi.